The chain runs to 132 residues: ATP synthase epsilon chain (132 aa).

This sequence belongs to the ATPase epsilon chain family. In terms of assembly, F-type ATPases have 2 components, CF(1) - the catalytic core - and CF(0) - the membrane proton channel. CF(1) has five subunits: alpha(3), beta(3), gamma(1), delta(1), epsilon(1). CF(0) has three main subunits: a, b and c.

Its subcellular location is the cell membrane. Functionally, produces ATP from ADP in the presence of a proton gradient across the membrane. The sequence is that of ATP synthase epsilon chain (atpC) from Bacillus caldotenax.